A 238-amino-acid polypeptide reads, in one-letter code: Ribonuclease PH (238 aa).

Phosphate-binding positions include Arg86 and 124 to 126 (GTR).

Belongs to the RNase PH family. As to quaternary structure, homohexameric ring arranged as a trimer of dimers.

The catalysed reaction is tRNA(n+1) + phosphate = tRNA(n) + a ribonucleoside 5'-diphosphate. Its function is as follows. Phosphorolytic 3'-5' exoribonuclease that plays an important role in tRNA 3'-end maturation. Removes nucleotide residues following the 3'-CCA terminus of tRNAs; can also add nucleotides to the ends of RNA molecules by using nucleoside diphosphates as substrates, but this may not be physiologically important. Probably plays a role in initiation of 16S rRNA degradation (leading to ribosome degradation) during starvation. The chain is Ribonuclease PH from Actinobacillus pleuropneumoniae serotype 7 (strain AP76).